The chain runs to 108 residues: Latartoxin-2c (108 aa).

The signal sequence occupies residues 1–19 (MKVLVITALCFILLQNVLG). Positions 20-42 (EDTYEDLQNYIENLINENQDEAR) are cleaved as a propeptide — removed in mature form. The short motif at 39–42 (DEAR) is the Processing quadruplet motif element. 4 disulfide bridges follow: cysteine 44–cysteine 61, cysteine 51–cysteine 72, cysteine 60–cysteine 84, and cysteine 74–cysteine 82. Isoleucine 107 carries the post-translational modification Isoleucine amide.

This sequence belongs to the neurotoxin 19 (CSTX) family. 11 (latartoxin) subfamily. In terms of processing, contains 4 disulfide bonds. Post-translationally, cleavage of the propeptide depends on the processing quadruplet motif (XXXR, with at least one of X being E). As to expression, expressed by the venom gland.

It is found in the secreted. In terms of biological role, insect toxin. In Lachesana tarabaevi (Spider), this protein is Latartoxin-2c.